The chain runs to 474 residues: Bifunctional protein HldE (474 aa).

Residues 1–318 (MKMTLPDFHC…ENAIRGRAET (318 aa)) form a ribokinase region. Position 195–198 (195–198 (NLSE)) interacts with ATP. The active site involves D264. A cytidylyltransferase region spans residues 344–474 (MTNGCFDILH…TNIIKAIKNQ (131 aa)).

It in the N-terminal section; belongs to the carbohydrate kinase PfkB family. In the C-terminal section; belongs to the cytidylyltransferase family. Homodimer.

It carries out the reaction D-glycero-beta-D-manno-heptose 7-phosphate + ATP = D-glycero-beta-D-manno-heptose 1,7-bisphosphate + ADP + H(+). The enzyme catalyses D-glycero-beta-D-manno-heptose 1-phosphate + ATP + H(+) = ADP-D-glycero-beta-D-manno-heptose + diphosphate. Its pathway is nucleotide-sugar biosynthesis; ADP-L-glycero-beta-D-manno-heptose biosynthesis; ADP-L-glycero-beta-D-manno-heptose from D-glycero-beta-D-manno-heptose 7-phosphate: step 1/4. The protein operates within nucleotide-sugar biosynthesis; ADP-L-glycero-beta-D-manno-heptose biosynthesis; ADP-L-glycero-beta-D-manno-heptose from D-glycero-beta-D-manno-heptose 7-phosphate: step 3/4. It participates in bacterial outer membrane biogenesis; LPS core biosynthesis. In terms of biological role, catalyzes the phosphorylation of D-glycero-D-manno-heptose 7-phosphate at the C-1 position to selectively form D-glycero-beta-D-manno-heptose-1,7-bisphosphate. Its function is as follows. Catalyzes the ADP transfer from ATP to D-glycero-beta-D-manno-heptose 1-phosphate, yielding ADP-D-glycero-beta-D-manno-heptose. This chain is Bifunctional protein HldE, found in Photorhabdus laumondii subsp. laumondii (strain DSM 15139 / CIP 105565 / TT01) (Photorhabdus luminescens subsp. laumondii).